A 464-amino-acid polypeptide reads, in one-letter code: MKTFPQAFLWGGATAANQVEGAYLEDGKGLTTSDVQPRGVFGDVVERVPGDSGIKDIAIDFYHRYPEDISLFAEMGFNCLRVSIAWARIFPHGDEAQPNEAGLAFYDKLFDEMAKHNITPLVTLSHYEMPWALVKNYGGWGNRKVIGFFERYARTVFERYQAKVKLWLTFNEINMSLHAPMTGVGLPADSSKAEVYQAIHHQLVASALAAKACHDIVPEGKIGNMLLGGLMYPLSCKPDDIFETLQQNRSWQFFGDVQCRGAYPGYMLRYFRDNGINLDITDADRAALKETVDFISFSYYMTGCVTADEELNKKARGNILSMVPNPHLASSEWGWQIDPLGLRTLLNVLWDRYQKPLFIVENGLGAKDKVEADGSINDDYRISYLNDHLVQVREAIEDGVELMGYTSWGPIDLVSASKAEMSKRYGFIYVDRDDDGNGTLARSRKKSFWWYKEVIATNGGSLKE.

The active-site Proton donor is Glu-172. Catalysis depends on Glu-361, which acts as the Nucleophile.

The protein belongs to the glycosyl hydrolase 1 family.

This chain is Phospho-cellobiase (casB), found in Klebsiella oxytoca.